The sequence spans 338 residues: Cilia- and flagella-associated protein 36 (338 aa).

A coiled-coil region spans residues 142–179; that stretch reads ISDLEQEEMKLVSEALRLSKEEYEREQLRRSAKELNCT. Disordered regions lie at residues 175 to 220 and 281 to 314; these read ELNC…ESPY and KKQE…KKSL. Polar residues predominate over residues 187–202; the sequence is KQSNGSERTPSNTELP. Residues 255–330 adopt a coiled-coil conformation; that stretch reads NLSQAEKEQL…AEKLKEEVIL (76 aa).

The protein belongs to the CFAP36 family.

Its subcellular location is the nucleus. It localises to the cytoplasm. The protein resides in the cell projection. The protein localises to the cilium. It is found in the flagellum. The chain is Cilia- and flagella-associated protein 36 from Xenopus laevis (African clawed frog).